The chain runs to 461 residues: Phosphomethylpyrimidine synthase (461 aa).

Substrate-binding positions include N81, M110, Y140, H176, 196 to 198 (SRG), 237 to 240 (DSLR), and E276. Residue H280 participates in Zn(2+) binding. A substrate-binding site is contributed by Y303. H344 contacts Zn(2+). [4Fe-4S] cluster-binding residues include C424, C427, and C432.

This sequence belongs to the ThiC family. It depends on [4Fe-4S] cluster as a cofactor.

The catalysed reaction is 5-amino-1-(5-phospho-beta-D-ribosyl)imidazole + S-adenosyl-L-methionine = 4-amino-2-methyl-5-(phosphooxymethyl)pyrimidine + CO + 5'-deoxyadenosine + formate + L-methionine + 3 H(+). Its pathway is cofactor biosynthesis; thiamine diphosphate biosynthesis. Its function is as follows. Catalyzes the synthesis of the hydroxymethylpyrimidine phosphate (HMP-P) moiety of thiamine from aminoimidazole ribotide (AIR) in a radical S-adenosyl-L-methionine (SAM)-dependent reaction. The protein is Phosphomethylpyrimidine synthase of Thermosynechococcus vestitus (strain NIES-2133 / IAM M-273 / BP-1).